Consider the following 341-residue polypeptide: MSFPYSLKPFNTFGVEQSCLSMIEVHSKAELQSTCLSLYQSKRPMLVLGGGSNIVFTDDFNGTVVRVLTKGISCSEDGTHFYLAVEAGENWHELVQFSLNQNMPGLENLALIPGTVGAAPIQNIGAYGVELCDICDWVEYLDLESGNLLRLTTDECEFAYRESIFKGSLRDKAVITAVGLRLPKAWHPKLAYGPLQSFNAETVTSREIFDRVCEVRSEKLPNPEELGNAGSFFKNPIVSAATYMQLAAHFPSIVGYAQPNGEVKLAAGWLIEHAGLKGFALGNAGVHAKQALVLVNLGHATGQDICRLALHVIARVNEVFGVKLEAEPRIMGLTGETSLDV.

The FAD-binding PCMH-type domain occupies 13 to 185; it reads FGVEQSCLSM…TAVGLRLPKA (173 aa). The active site involves arginine 161. Residue serine 231 is the Proton donor of the active site. Glutamate 327 is a catalytic residue.

It belongs to the MurB family. FAD serves as cofactor.

The protein localises to the cytoplasm. The catalysed reaction is UDP-N-acetyl-alpha-D-muramate + NADP(+) = UDP-N-acetyl-3-O-(1-carboxyvinyl)-alpha-D-glucosamine + NADPH + H(+). The protein operates within cell wall biogenesis; peptidoglycan biosynthesis. Cell wall formation. This is UDP-N-acetylenolpyruvoylglucosamine reductase from Shewanella sp. (strain MR-7).